A 597-amino-acid polypeptide reads, in one-letter code: tRNA uridine 5-carboxymethylaminomethyl modification enzyme MnmG (597 aa).

An FAD-binding site is contributed by 10–15 (GGGHAG). Position 267 to 281 (267 to 281 (GPRYCPSIEDKVVRF)) interacts with NAD(+).

Belongs to the MnmG family. As to quaternary structure, homodimer. Heterotetramer of two MnmE and two MnmG subunits. It depends on FAD as a cofactor.

The protein localises to the cytoplasm. In terms of biological role, NAD-binding protein involved in the addition of a carboxymethylaminomethyl (cmnm) group at the wobble position (U34) of certain tRNAs, forming tRNA-cmnm(5)s(2)U34. The sequence is that of tRNA uridine 5-carboxymethylaminomethyl modification enzyme MnmG from Thermus thermophilus (strain ATCC BAA-163 / DSM 7039 / HB27).